The chain runs to 239 residues: Norbelladine 4'-O-methyltransferase 5 (239 aa).

Residues V55, E77, 79–80, S85, D103, and A132 each bind S-adenosyl-L-methionine; that span reads GV. D155 provides a ligand contact to a divalent metal cation. D157 is an S-adenosyl-L-methionine binding site. D181 and N182 together coordinate a divalent metal cation.

Belongs to the class I-like SAM-binding methyltransferase superfamily. Cation-dependent O-methyltransferase family. It depends on Mg(2+) as a cofactor.

It carries out the reaction norbelladine + S-adenosyl-L-methionine = 4'-O-methylnorbelladine + S-adenosyl-L-homocysteine + H(+). Its pathway is alkaloid biosynthesis. 4'-O-methyltransferase converting norbelladine to 4'-O-methylnorbelladine. 4'-O-methylnorbelladine is a precursor to all Amaryllidaceae alkaloids such as galanthamine, lycorine and haemanthamine, and including haemanthamine- and crinamine-type alkaloids, promising anticancer agents. In Narcissus aff. pseudonarcissus MK-2014 (Daffodil), this protein is Norbelladine 4'-O-methyltransferase 5.